Consider the following 1563-residue polypeptide: NACHT domain- and WD repeat-containing protein 1 (1563 aa).

The WD 1 repeat unit spans residues T274–C314. Residues T336–V666 enclose the NACHT domain. An ATP-binding site is contributed by G342 to T349. WD repeat units lie at residues G866–V905, G908–T947, Q954–C994, D998–K1037, K1044–K1082, E1126–N1165, E1168–S1207, L1212–C1251, D1253–C1292, Q1346–E1385, A1386–E1425, and S1431–V1470. The tract at residues A1534–L1563 is disordered.

May interact with HSP90AA1, HSP90AB1 and BAG2.

The protein localises to the cytoplasm. It localises to the cytosol. Functionally, may play a role in the control of androgen receptor (AR) protein steady-state levels. This Mus musculus (Mouse) protein is NACHT domain- and WD repeat-containing protein 1 (Nwd1).